Consider the following 229-residue polypeptide: Potassium/proton antiporter CemA (229 aa).

The next 3 helical transmembrane spans lie at 7-27, 107-127, and 189-209; these read FTPL…SFSV, ILHF…SILG, and IISG…KYWI.

The protein belongs to the CemA family.

The protein localises to the plastid. The protein resides in the chloroplast inner membrane. It catalyses the reaction K(+)(in) + H(+)(out) = K(+)(out) + H(+)(in). Its function is as follows. Contributes to K(+)/H(+) antiport activity by supporting proton efflux to control proton extrusion and homeostasis in chloroplasts in a light-dependent manner to modulate photosynthesis. Prevents excessive induction of non-photochemical quenching (NPQ) under continuous-light conditions. Indirectly promotes efficient inorganic carbon uptake into chloroplasts. The sequence is that of Potassium/proton antiporter CemA from Nicotiana sylvestris (Wood tobacco).